Consider the following 289-residue polypeptide: 4-hydroxy-tetrahydrodipicolinate synthase (289 aa).

T44 provides a ligand contact to pyruvate. The active-site Proton donor/acceptor is Y132. Residue K161 is the Schiff-base intermediate with substrate of the active site. I201 is a pyruvate binding site.

This sequence belongs to the DapA family. As to quaternary structure, homotetramer; dimer of dimers.

It is found in the cytoplasm. The enzyme catalyses L-aspartate 4-semialdehyde + pyruvate = (2S,4S)-4-hydroxy-2,3,4,5-tetrahydrodipicolinate + H2O + H(+). The protein operates within amino-acid biosynthesis; L-lysine biosynthesis via DAP pathway; (S)-tetrahydrodipicolinate from L-aspartate: step 3/4. Its function is as follows. Catalyzes the condensation of (S)-aspartate-beta-semialdehyde [(S)-ASA] and pyruvate to 4-hydroxy-tetrahydrodipicolinate (HTPA). This Methanocaldococcus jannaschii (strain ATCC 43067 / DSM 2661 / JAL-1 / JCM 10045 / NBRC 100440) (Methanococcus jannaschii) protein is 4-hydroxy-tetrahydrodipicolinate synthase.